The following is a 682-amino-acid chain: uncharacterized protein (682 aa).

Positions 284–487 constitute an MCM domain; it reads VVNILADRLI…KDKDIAEYIV (204 aa). 329 to 336 contacts ATP; that stretch reads TDPGIGKT.

It belongs to the MCM family.

This is an uncharacterized protein from Methanocaldococcus jannaschii (strain ATCC 43067 / DSM 2661 / JAL-1 / JCM 10045 / NBRC 100440) (Methanococcus jannaschii).